Here is a 339-residue protein sequence, read N- to C-terminus: Undifferentiated embryonic cell transcription factor 1 (339 aa).

2 disordered regions span residues 1–62 (MLLR…QRTP) and 144–270 (MGLL…QVAP). Phosphoserine occurs at positions 15, 18, 48, and 54. Basic residues predominate over residues 154–170 (RVRRRSTGPGRPQRRGR). 2 stretches are compositionally biased toward low complexity: residues 171–193 (SSLSALAPAPAPVEQEAELPLAA) and 218–229 (TSSPPLTSTDTL). Over residues 261-270 (GRASSPQVAP) the composition is skewed to polar residues. A leucine-zipper region spans residues 279–310 (QTLTHLGDISTVLGPLRDQLSTLNQHVEHLRG).

In terms of assembly, binds to the N-terminal region of ATF2. Associates with the TFIID complex through interaction with TBP. Post-translationally, phosphorylated. In terms of tissue distribution, expressed mainly in pluripotent cells with expression rapidly down-regulated upon cell differentiation.

The protein resides in the nucleus. In terms of biological role, acts as a transcriptional coactivator of ATF2. The polypeptide is Undifferentiated embryonic cell transcription factor 1 (Mus musculus (Mouse)).